The primary structure comprises 590 residues: G protein-coupled receptor kinase 5 (590 aa).

The segment at M1–T185 is N-terminal. Positions G20 to I39 are interaction with calmodulin. The RGS domain maps to Y53–L171. One can recognise a Protein kinase domain in the interval F186–F448. ATP is bound by residues L192–V200 and K215. D311 (proton acceptor) is an active-site residue. The Nuclear localization signal signature appears at R388–E395. The AGC-kinase C-terminal domain maps to R449–E514. A Phosphoserine; by autocatalysis modification is found at S484. T485 carries the phosphothreonine; by autocatalysis modification. Residues G531 to S590 form a disordered region. Over residues N538 to K547 the composition is skewed to basic and acidic residues. The sufficient for membrane localization stretch occupies residues P546–S565. Low complexity predominate over residues S563–S590. The residue at position 579 (S579) is a Phosphoserine.

It belongs to the protein kinase superfamily. AGC Ser/Thr protein kinase family. GPRK subfamily. Interacts with ST13 (via the C-terminus 303-319 AA). Interacts with TP53/p53. Interacts with HTR4 (via C-terminus 330-346 AA); this interaction is promoted by 5-HT (serotonin). Interacts with HDAC5. Interacts with GIT1. Post-translationally, autophosphorylated. Autophosphorylation may play a critical role in the regulation of GRK5 kinase activity. Highest levels in heart, placenta, lung &gt; skeletal muscle &gt; brain, liver, pancreas &gt; kidney.

It is found in the cytoplasm. The protein resides in the nucleus. Its subcellular location is the cell membrane. It catalyses the reaction [G-protein-coupled receptor] + ATP = [G-protein-coupled receptor]-phosphate + ADP + H(+). With respect to regulation, inhibited by calmodulin with an IC(50) of 50 nM. Calmodulin inhibits GRK5 association with receptor and phospholipid. In terms of biological role, serine/threonine kinase that phosphorylates preferentially the activated forms of a variety of G-protein-coupled receptors (GPCRs). Such receptor phosphorylation initiates beta-arrestin-mediated receptor desensitization, internalization, and signaling events leading to their down-regulation. Phosphorylates a variety of GPCRs, including adrenergic receptors, muscarinic acetylcholine receptors (more specifically Gi-coupled M2/M4 subtypes), dopamine receptors and opioid receptors. In addition to GPCRs, also phosphorylates various substrates: Hsc70-interacting protein/ST13, TP53/p53, HDAC5, and arrestin-1/ARRB1. Phosphorylation of ARRB1 by GRK5 inhibits G-protein independent MAPK1/MAPK3 signaling downstream of 5HT4-receptors. Phosphorylation of HDAC5, a repressor of myocyte enhancer factor 2 (MEF2) leading to nuclear export of HDAC5 and allowing MEF2-mediated transcription. Phosphorylation of TP53/p53, a crucial tumor suppressor, inhibits TP53/p53-mediated apoptosis. Phosphorylation of ST13 regulates internalization of the chemokine receptor. Phosphorylates rhodopsin (RHO) (in vitro) and a non G-protein-coupled receptor, LRP6 during Wnt signaling (in vitro). The polypeptide is G protein-coupled receptor kinase 5 (GRK5) (Homo sapiens (Human)).